The following is a 95-amino-acid chain: Co-chaperonin GroES (95 aa).

Belongs to the GroES chaperonin family. As to quaternary structure, heptamer of 7 subunits arranged in a ring. Interacts with the chaperonin GroEL.

Its subcellular location is the cytoplasm. Its function is as follows. Together with the chaperonin GroEL, plays an essential role in assisting protein folding. The GroEL-GroES system forms a nano-cage that allows encapsulation of the non-native substrate proteins and provides a physical environment optimized to promote and accelerate protein folding. GroES binds to the apical surface of the GroEL ring, thereby capping the opening of the GroEL channel. The protein is Co-chaperonin GroES of Cereibacter sphaeroides (strain KD131 / KCTC 12085) (Rhodobacter sphaeroides).